The following is a 69-amino-acid chain: uncharacterized protein (69 aa).

This is an uncharacterized protein from Escherichia coli O157:H7.